The chain runs to 255 residues: Ornithine decarboxylase antizyme (255 aa).

This sequence belongs to the ODC antizyme family. As to quaternary structure, interacts with ODC and thereby sterically blocks ODC homodimerization.

Ornithine decarboxylase (ODC) antizyme protein that negatively regulates ODC activity and intracellular polyamine biosynthesis in response to increased intracellular polyamine levels. Binds to ODC monomers, inhibiting the assembly of the functional ODC homodimer, and targets the monomers for ubiquitin-independent proteolytic destruction by the 26S proteasome. The chain is Ornithine decarboxylase antizyme (OAZ1) from Eremothecium gossypii (strain ATCC 10895 / CBS 109.51 / FGSC 9923 / NRRL Y-1056) (Yeast).